The sequence spans 298 residues: uncharacterized protein (298 aa).

Residues 194 to 295 (KRLNTALIAI…QLSPSQYRKS (102 aa)) enclose the HTH araC/xylS-type domain. 2 consecutive DNA-binding regions (H-T-H motif) follow at residues 214-235 (EQLAELATMSRANFIRIFQQHI) and 262-285 (VLAIALEVGYQSEAHFCKVFKNYY).

This is an uncharacterized protein from Haemophilus influenzae (strain ATCC 51907 / DSM 11121 / KW20 / Rd).